Here is a 557-residue protein sequence, read N- to C-terminus: uncharacterized protein (557 aa).

A coiled-coil region spans residues 2 to 45 (NEDETSILNKKMEKIEVEMAEFERLGAEREKEAVERIVQEENQN). Disordered regions lie at residues 39 to 62 (VQEE…KSRK), 101 to 127 (NRTY…RKNF), 356 to 402 (PSPS…YPSN), and 536 to 557 (ANAT…YDHI). 4 stretches are compositionally biased toward polar residues: residues 101–110 (NRTYYKNSQG), 358–380 (PSFQ…SSNA), 390–400 (DSATYPTSIYP), and 536–548 (ANAT…NLDT).

It localises to the cytoplasm. The protein resides in the nucleus. This is an uncharacterized protein from Schizosaccharomyces pombe (strain 972 / ATCC 24843) (Fission yeast).